Consider the following 135-residue polypeptide: Dihydromethanopterin reductase (135 aa).

Residues Ala-9, 16 to 21 (LGLNGH), 52 to 54 (PKT), and 93 to 97 (GGIAV) each bind NADP(+).

Homodimer.

It carries out the reaction 5,6,7,8-tetrahydromethanopterin + NAD(+) = 7,8-dihydromethanopterin + NADH + H(+). The catalysed reaction is 5,6,7,8-tetrahydromethanopterin + NADP(+) = 7,8-dihydromethanopterin + NADPH + H(+). It participates in cofactor biosynthesis; 5,6,7,8-tetrahydromethanopterin biosynthesis. In terms of biological role, catalyzes the reduction of dihydromethanopterin (H(2)MPT) to tetrahydromethanopterin (H(4)MPT). Shows preference for NADPH rather than NADH as electron donor. Does not reduce dihydrofolate. The polypeptide is Dihydromethanopterin reductase (dmrA) (Methylorubrum extorquens (strain ATCC 14718 / DSM 1338 / JCM 2805 / NCIMB 9133 / AM1) (Methylobacterium extorquens)).